The following is a 121-amino-acid chain: MRHYEIVLLVHPDQSEQVPAMLERYKTLVTAANGKVHRVEDWGRFQLAYMINKLAKAHYLCLNIECSKETLAEIETGFRFNDAVLRHLTVKRDKAETGPSAVMKRVEKEEARKSSQQETAA.

A disordered region spans residues 94 to 121 (KAETGPSAVMKRVEKEEARKSSQQETAA). Residues 104 to 115 (KRVEKEEARKSS) show a composition bias toward basic and acidic residues.

It belongs to the bacterial ribosomal protein bS6 family.

Its function is as follows. Binds together with bS18 to 16S ribosomal RNA. The sequence is that of Small ribosomal subunit protein bS6 from Leptothrix cholodnii (strain ATCC 51168 / LMG 8142 / SP-6) (Leptothrix discophora (strain SP-6)).